The chain runs to 621 residues: (-)-beta-phellandrene synthase 1, chloroplastic (621 aa).

A chloroplast-targeting transit peptide spans 1–49; the sequence is MALALVSVAPLVSMRRSLFSSPYELKSIDKTIPNLVMCRKRMLGRPSIR. The Mg(2+) site is built by Asp372, Asp376, and Asp524. The DDXXD motif signature appears at 372 to 376; that stretch reads DDIYD.

Belongs to the terpene synthase family. Tpsd subfamily. Requires Mg(2+) as cofactor. Mn(2+) serves as cofactor.

The protein localises to the plastid. It is found in the chloroplast. The catalysed reaction is (2E)-geranyl diphosphate = (-)-beta-phellandrene + diphosphate. The protein operates within terpene metabolism; oleoresin biosynthesis. It participates in secondary metabolite biosynthesis; terpenoid biosynthesis. Functionally, monoterpene synthase (TPS) involved in the biosynthesis of monoterpene natural products included in conifer oleoresin secretions and volatile emissions; these compounds contribute to biotic and abiotic stress defense against herbivores and pathogens. Catalyzes the conversion of (2E)-geranyl diphosphate (GPP) to (-)-beta-phellandrene. This Pinus banksiana (Jack pine) protein is (-)-beta-phellandrene synthase 1, chloroplastic.